A 315-amino-acid polypeptide reads, in one-letter code: ADP/ATP translocase 4 (315 aa).

The Mitochondrial intermembrane portion of the chain corresponds to 1–19 (MHREPPKKKAEKRLFDASS). The Solcar 1 repeat unit spans residues 18–110 (SSFGKDLLAG…FAFKDKYKQL (93 aa)). The helical transmembrane segment at 20-49 (FGKDLLAGGVAAAVSKTAVAPIERVKLLLQ) threads the bilayer. Topologically, residues 50–86 (VQASSKQISPEARYKGMVDCLVRIPREQGFFSFWRGN) are mitochondrial matrix. The chain crosses the membrane as a helical span at residues 87-111 (LANVIRYFPTQALNFAFKDKYKQLF). 2 residues coordinate ADP: arginine 92 and lysine 104. Over 112–121 (MSGVNKEKQF) the chain is Mitochondrial intermembrane. The chain crosses the membrane as a helical span at residues 122–142 (WRWFLANLASGGAAGATSLCV). Solcar repeat units follow at residues 123–213 (RWFL…VKGL) and 220–307 (TPFL…IKEF). Residues 143–190 (VYPLDFARTRLGVDIGKGPEERQFKGLGDCIMKIAKSDGIAGLYQGFG) lie on the Mitochondrial matrix side of the membrane. A helical membrane pass occupies residues 191–211 (VSVQGIIVYRASYFGAYDTVK). At 212-222 (GLLPKPKKTPF) the chain is on the mitochondrial intermembrane side. Residues 223–243 (LVSFFIAQVVTTCSGILSYPF) form a helical membrane-spanning segment. Topologically, residues 244-283 (DTVRRRMMMQSGEAKRQYKGTLDCFVKIYQHEGINSFFRG) are mitochondrial matrix. Arginine 247 contributes to the ADP binding site. The segment at 247 to 252 (RRRMMM) is important for transport activity. A Nucleotide carrier signature motif motif is present at residues 247-252 (RRRMMM). Residues 284 to 301 (AFSNVLRGTGGALVLVLY) form a helical membrane-spanning segment. The Mitochondrial intermembrane segment spans residues 302 to 315 (DKIKEFFHIDIGGR).

It belongs to the mitochondrial carrier (TC 2.A.29) family. As to quaternary structure, monomer.

It localises to the mitochondrion inner membrane. The protein localises to the membrane. Its subcellular location is the cell projection. It is found in the cilium. The protein resides in the flagellum membrane. The catalysed reaction is ADP(in) + ATP(out) = ADP(out) + ATP(in). The enzyme catalyses dATP(out) + ADP(in) = dATP(in) + ADP(out). It carries out the reaction dADP(in) + ADP(out) = dADP(out) + ADP(in). It catalyses the reaction H(+)(in) = H(+)(out). The matrix-open state (m-state) is inhibited by the membrane-permeable bongkrekic acid (BKA). The cytoplasmic-open state (c-state) is inhibited by the membrane-impermeable toxic inhibitor carboxyatractyloside (CATR). Proton transporter activity is inhibited by ADP:ATP antiporter activity. Its function is as follows. ADP:ATP antiporter that mediates import of ADP into the mitochondrial matrix for ATP synthesis, and export of ATP out to fuel the cell. Cycles between the cytoplasmic-open state (c-state) and the matrix-open state (m-state): operates by the alternating access mechanism with a single substrate-binding site intermittently exposed to either the cytosolic (c-state) or matrix (m-state) side of the inner mitochondrial membrane. Specifically required during spermatogenesis, probably to mediate ADP:ATP exchange in spermatocytes. Large ATP supplies from mitochondria may be critical for normal progression of spermatogenesis during early stages of meiotic prophase I, including DNA double-strand break repair and chromosomal synapsis. In addition to its ADP:ATP antiporter activity, also involved in mitochondrial uncoupling and mitochondrial permeability transition pore (mPTP) activity. Plays a role in mitochondrial uncoupling by acting as a proton transporter: proton transport uncouples the proton flows via the electron transport chain and ATP synthase to reduce the efficiency of ATP production and cause mitochondrial thermogenesis. Proton transporter activity is inhibited by ADP:ATP antiporter activity, suggesting that SLC25A31/ANT4 acts as a master regulator of mitochondrial energy output by maintaining a delicate balance between ATP production (ADP:ATP antiporter activity) and thermogenesis (proton transporter activity). Proton transporter activity requires free fatty acids as cofactor, but does not transport it. Among nucleotides, may also exchange ADP for dATP and dADP. Also plays a key role in mPTP opening, a non-specific pore that enables free passage of the mitochondrial membranes to solutes of up to 1.5 kDa, and which contributes to cell death. It is however unclear if SLC25A31/ANT4 constitutes a pore-forming component of mPTP or regulates it. The chain is ADP/ATP translocase 4 from Macaca fascicularis (Crab-eating macaque).